Here is a 41-residue protein sequence, read N- to C-terminus: Photosystem I reaction center subunit IX (41 aa).

The chain crosses the membrane as a helical span at residues 7–27; the sequence is YLSTAPVVAAAWFTFTAGLLI.

This sequence belongs to the PsaJ family.

The protein localises to the plastid. Its subcellular location is the chloroplast thylakoid membrane. In terms of biological role, may help in the organization of the PsaE and PsaF subunits. This is Photosystem I reaction center subunit IX from Oltmannsiellopsis viridis (Marine flagellate).